Consider the following 544-residue polypeptide: Tyrosine-protein kinase fynb (544 aa).

Residue G2 is the site of N-myristoyl glycine attachment. 2 S-palmitoyl cysteine lipidation sites follow: C3 and C6. Residues 89–150 form the SH3 domain; sequence TGVTLFVALY…PSNYVAPVDS (62 aa). The 98-residue stretch at 156–253 folds into the SH2 domain; sequence WYFGKLGRKD…GLCCRLVVPC (98 aa). One can recognise a Protein kinase domain in the interval 278–531; sequence LQLIKRLGNG…YLQAFLEDYF (254 aa). Residues 284-292 and K306 contribute to the ATP site; that span reads LGNGQFGEV. The active-site Proton acceptor is the D397. Y427 carries the post-translational modification Phosphotyrosine; by autocatalysis. Y538 is subject to Phosphotyrosine.

This sequence belongs to the protein kinase superfamily. Tyr protein kinase family. SRC subfamily. It depends on Mn(2+) as a cofactor.

The protein localises to the cytoplasm. The catalysed reaction is L-tyrosyl-[protein] + ATP = O-phospho-L-tyrosyl-[protein] + ADP + H(+). Inhibited by phosphorylation of Tyr-538 by leukocyte common antigen and activated by dephosphorylation of this site. In terms of biological role, tyrosine-protein kinase implicated in the control of cell growth. Plays a role in the regulation of intracellular calcium levels. Required in brain development and mature brain function with important roles in the regulation of axon growth, axon guidance, and neurite extension. Role in CNTN1-mediated signaling. In Danio rerio (Zebrafish), this protein is Tyrosine-protein kinase fynb (fynb).